We begin with the raw amino-acid sequence, 289 residues long: Syntaxin-3 (289 aa).

Over 1–263 (MKDRLEQLKA…VKYQSQARKK (263 aa)) the chain is Cytoplasmic. The stretch at 32–111 (MDEFFSEIEE…IEEDEVRSSA (80 aa)) forms a coiled coil. Residues 191-253 (LSEIEGRHKD…EKARDETKKA (63 aa)) enclose the t-SNARE coiled-coil homology domain. The chain crosses the membrane as a helical; Anchor for type IV membrane protein span at residues 264–284 (LIIIIVLVVVLLGILALIIGL). The Extracellular portion of the chain corresponds to 285–289 (SVGLN).

The protein belongs to the syntaxin family. Interacts with REEP6. Interacts with PRPH2 in rod and cone photoreceptors. Interacts with ROM1. Interacts with SNAP25. Interacts with VAMP2. In terms of assembly, interacts with IPO5. Expressed in small intestine, kidney, pancreas, placenta as well as in retina. Weaker expression in lung, liver and heart. Not expressed in brain and skeletal muscle. In terms of tissue distribution, expressed only in the retina. As to expression, ubiquitously expressed.

The protein resides in the apical cell membrane. The protein localises to the nucleus. Functionally, potentially involved in docking of synaptic vesicles at presynaptic active zones. Apical receptor involved in membrane fusion of apical vesicles. In terms of biological role, essential for survival of retinal photoreceetors. Its function is as follows. Functions as a regulator of gene expression. This chain is Syntaxin-3 (STX3), found in Homo sapiens (Human).